The primary structure comprises 87 residues: Small ribosomal subunit protein uS19 (87 aa).

Belongs to the universal ribosomal protein uS19 family.

Protein S19 forms a complex with S13 that binds strongly to the 16S ribosomal RNA. In Mesoplasma florum (strain ATCC 33453 / NBRC 100688 / NCTC 11704 / L1) (Acholeplasma florum), this protein is Small ribosomal subunit protein uS19.